We begin with the raw amino-acid sequence, 235 residues long: Aspartate/glutamate leucyltransferase (235 aa).

The protein belongs to the R-transferase family. Bpt subfamily.

The protein resides in the cytoplasm. The catalysed reaction is N-terminal L-glutamyl-[protein] + L-leucyl-tRNA(Leu) = N-terminal L-leucyl-L-glutamyl-[protein] + tRNA(Leu) + H(+). The enzyme catalyses N-terminal L-aspartyl-[protein] + L-leucyl-tRNA(Leu) = N-terminal L-leucyl-L-aspartyl-[protein] + tRNA(Leu) + H(+). Its function is as follows. Functions in the N-end rule pathway of protein degradation where it conjugates Leu from its aminoacyl-tRNA to the N-termini of proteins containing an N-terminal aspartate or glutamate. The polypeptide is Aspartate/glutamate leucyltransferase (Pseudomonas aeruginosa (strain LESB58)).